The chain runs to 164 residues: MTGAVCPGSFDPVTNGHLDVIGRAAAQFDEVIVTVMVNKNKRGLFTVEERIEMLEDSTADLPNVRVSSWHGLLVDYAKQQGITAIVKGLRGANDFDYELQMAQMNQKLSGVDTLFIPTNPTYSYLSSSLVKEVATFGGDVSDMLPEKVHARLLTRIAERAAESS.

Position 9 (serine 9) interacts with substrate. ATP is bound by residues 9–10 (SF) and histidine 17. Positions 41, 73, and 87 each coordinate substrate. ATP contacts are provided by residues 88–90 (GLR), glutamate 98, and 122–128 (YSYLSSS).

Belongs to the bacterial CoaD family. As to quaternary structure, homohexamer. The cofactor is Mg(2+).

Its subcellular location is the cytoplasm. It carries out the reaction (R)-4'-phosphopantetheine + ATP + H(+) = 3'-dephospho-CoA + diphosphate. It functions in the pathway cofactor biosynthesis; coenzyme A biosynthesis; CoA from (R)-pantothenate: step 4/5. In terms of biological role, reversibly transfers an adenylyl group from ATP to 4'-phosphopantetheine, yielding dephospho-CoA (dPCoA) and pyrophosphate. This is Phosphopantetheine adenylyltransferase from Rhodococcus opacus (strain B4).